Here is a 132-residue protein sequence, read N- to C-terminus: Large-conductance mechanosensitive channel (132 aa).

Transmembrane regions (helical) follow at residues 14–34 (VIDLAVGVVIGAAFGKIVSSL) and 67–87 (GNFIQTIFDFLIIAAAIFMFV).

This sequence belongs to the MscL family. As to quaternary structure, homopentamer.

Its subcellular location is the cell membrane. Its function is as follows. Channel that opens in response to stretch forces in the membrane lipid bilayer. May participate in the regulation of osmotic pressure changes within the cell. This is Large-conductance mechanosensitive channel from Bacillus cereus (strain AH820).